Here is a 55-residue protein sequence, read N- to C-terminus: Large ribosomal subunit protein bL33 (55 aa).

It belongs to the bacterial ribosomal protein bL33 family.

The protein is Large ribosomal subunit protein bL33 of Rhodopseudomonas palustris (strain BisB18).